We begin with the raw amino-acid sequence, 251 residues long: CDP-diacylglycerol pyrophosphatase (251 aa).

The helical transmembrane segment at 4-24 (AGLLFLVMIVIAVVAAGIGYW) threads the bilayer.

Belongs to the Cdh family.

Its subcellular location is the cell inner membrane. The catalysed reaction is a CDP-1,2-diacyl-sn-glycerol + H2O = a 1,2-diacyl-sn-glycero-3-phosphate + CMP + 2 H(+). It participates in phospholipid metabolism; CDP-diacylglycerol degradation; phosphatidate from CDP-diacylglycerol: step 1/1. The sequence is that of CDP-diacylglycerol pyrophosphatase from Escherichia coli O7:K1 (strain IAI39 / ExPEC).